We begin with the raw amino-acid sequence, 317 residues long: Methionyl-tRNA formyltransferase (317 aa).

Residue 110–113 (SLLP) coordinates (6S)-5,6,7,8-tetrahydrofolate.

This sequence belongs to the Fmt family.

The catalysed reaction is L-methionyl-tRNA(fMet) + (6R)-10-formyltetrahydrofolate = N-formyl-L-methionyl-tRNA(fMet) + (6S)-5,6,7,8-tetrahydrofolate + H(+). Its function is as follows. Attaches a formyl group to the free amino group of methionyl-tRNA(fMet). The formyl group appears to play a dual role in the initiator identity of N-formylmethionyl-tRNA by promoting its recognition by IF2 and preventing the misappropriation of this tRNA by the elongation apparatus. The polypeptide is Methionyl-tRNA formyltransferase (Lactiplantibacillus plantarum (strain ATCC BAA-793 / NCIMB 8826 / WCFS1) (Lactobacillus plantarum)).